A 487-amino-acid chain; its full sequence is Calcium-binding tyrosine phosphorylation-regulated protein (487 aa).

One can recognise an RIIa domain in the interval Tyr12 to Gly49. 2 stretches are compositionally biased toward basic and acidic residues: residues Lys78–Val91 and Lys101–Asp117. 3 disordered regions span residues Lys78–Pro163, Val243–Pro271, and Ile420–Glu487. Over residues Ser140 to Pro152 the composition is skewed to low complexity. 2 stretches are compositionally biased toward polar residues: residues Ile420–Pro436 and Ser455–Gly464. Residues Ile478–Glu487 show a composition bias toward acidic residues.

Interacts with FSCB. In terms of processing, phosphorylated on tyrosine residues during in vitro capacitation. Dephosphorylation affects its ability to bind calcium.

It is found in the cytoplasm. The protein localises to the cytoskeleton. It localises to the cell projection. Its subcellular location is the cilium. The protein resides in the flagellum. Its function is as follows. May function as a regulator of both motility- and head-associated functions such as capacitation and the acrosome reaction. May bind calcium in vitro. The protein is Calcium-binding tyrosine phosphorylation-regulated protein (CABYR) of Macaca fascicularis (Crab-eating macaque).